Reading from the N-terminus, the 317-residue chain is Protein KlaC (317 aa).

Its function is as follows. Belongs to the kla operon, which is associated with cryptic tellurite resistance, and IncW plasmid fertility inhibition. In Escherichia coli, this protein is Protein KlaC (klaC).